The chain runs to 406 residues: Olfactomedin-like protein 3 (406 aa).

Residues 1 to 21 (MGPSAPLLLLFFLSWTGPLQG) form the signal peptide. The stretch at 25-101 (HLVEYMERRL…REVDYLETQN (77 aa)) forms a coiled coil. Positions 134 to 401 (DCSYTVAQVR…QIVYKLEMKK (268 aa)) constitute an Olfactomedin-like domain. Cysteine 135 and cysteine 328 are disulfide-bonded. 2 N-linked (GlcNAc...) asparagine glycosylation sites follow: asparagine 177 and asparagine 248.

Belongs to the OLFML3 family.

The protein localises to the secreted. Secreted scaffold protein that plays an essential role in dorsoventral patterning during early development. Stabilizes axial formation by restricting chordin (CHRD) activity on the dorsal side. Acts by facilitating the association between the tolloid proteases and their substrate chordin (CHRD), leading to enhance chordin (CHRD) degradation. May have matrix-related function involved in placental and embryonic development, or play a similar role in other physiological processes. The chain is Olfactomedin-like protein 3 (Olfml3) from Mus musculus (Mouse).